The chain runs to 218 residues: Pyridoxine/pyridoxamine 5'-phosphate oxidase (218 aa).

Substrate contacts are provided by residues 14 to 17 (RREY) and K72. FMN is bound by residues 67–72 (RIVLLK), 82–83 (YT), R88, K89, and Q111. Substrate contacts are provided by Y129, R133, and S137. Residues 146-147 (QS) and W191 each bind FMN. 197-199 (RLH) serves as a coordination point for substrate. R201 is a binding site for FMN.

Belongs to the pyridoxamine 5'-phosphate oxidase family. As to quaternary structure, homodimer. The cofactor is FMN.

The enzyme catalyses pyridoxamine 5'-phosphate + O2 + H2O = pyridoxal 5'-phosphate + H2O2 + NH4(+). It catalyses the reaction pyridoxine 5'-phosphate + O2 = pyridoxal 5'-phosphate + H2O2. It participates in cofactor metabolism; pyridoxal 5'-phosphate salvage; pyridoxal 5'-phosphate from pyridoxamine 5'-phosphate: step 1/1. Its pathway is cofactor metabolism; pyridoxal 5'-phosphate salvage; pyridoxal 5'-phosphate from pyridoxine 5'-phosphate: step 1/1. Catalyzes the oxidation of either pyridoxine 5'-phosphate (PNP) or pyridoxamine 5'-phosphate (PMP) into pyridoxal 5'-phosphate (PLP). The protein is Pyridoxine/pyridoxamine 5'-phosphate oxidase of Escherichia coli O7:K1 (strain IAI39 / ExPEC).